A 334-amino-acid polypeptide reads, in one-letter code: Nucleoid-associated protein SG1574 (334 aa).

The protein belongs to the YejK family.

It is found in the cytoplasm. It localises to the nucleoid. This chain is Nucleoid-associated protein SG1574, found in Sodalis glossinidius (strain morsitans).